The chain runs to 512 residues: Cytochrome P450 monooxygenase astD (512 aa).

A helical membrane pass occupies residues 19-39 (MGISILVMLSTFLALGTIFVY). Asn191 and Asn413 each carry an N-linked (GlcNAc...) asparagine glycan. Residue Cys449 coordinates heme.

This sequence belongs to the cytochrome P450 family. Heme is required as a cofactor.

It is found in the membrane. It functions in the pathway secondary metabolite biosynthesis; terpenoid biosynthesis. In terms of biological role, cytochrome P450 monooxygenase; part of the gene cluster that mediates the biosynthesis of astellolides, drimane-type sesquiterpene esters that show antimicrobial, anti-inflammatory, and anti-tumor activities. The first step in astellolide biosynthesis is performed by the sesquiterpene cyclase astC that catalyzes the formation of drimanyl pyrophosphate from farnesyl pyrophosphate. Drimanyl pyrophosphate is then dephosphorylated by the sesquiterpene phosphatase astI to produce drimanyl monophosphate which is further dephosphorylated to drim-8-ene-11-ol by atsK. Drim-8-ene-11-ol is converted to confertifolin, probably by the cytochrome P450 monooxygenase astD and/or the dehydrogenase astE. The cytochrome P450 monooxygenases astB, astF and astJ then hydroxylate confertifolin at C6, C14, or C15 to form trihydroxy confertifolin. The nonribosomal peptide synthetase astA catalyzes ester bond formation between trihydroxy contifolin and benzoic acid (BA) or 4-hydroxy benzoic acid (4HBA), leading to the formation of dideacetyl astellolides A and B, respectively. Finally, the O-acetyltransferase astG converts dideacetyl astellolides A and B into deacetyl astellolides A and B. In Aspergillus oryzae (strain ATCC 42149 / RIB 40) (Yellow koji mold), this protein is Cytochrome P450 monooxygenase astD.